The sequence spans 167 residues: CGG triplet repeat-binding protein 1 (167 aa).

Serine 56 bears the Phosphoserine mark. Residues lysine 65 to leucine 86 are disordered. The Nuclear localization signal signature appears at arginine 80–arginine 84. The residue at position 164 (serine 164) is a Phosphoserine.

The protein localises to the nucleus. Functionally, binds to nonmethylated 5'-d(CGG)(n)-3' trinucleotide repeats in the FMR1 promoter. May play a role in regulating FMR1 promoter. The polypeptide is CGG triplet repeat-binding protein 1 (Cggbp1) (Mus musculus (Mouse)).